Reading from the N-terminus, the 136-residue chain is Putative covalently bound cell wall protein 22 (136 aa).

A signal peptide spans 1 to 18; that stretch reads MQFSTVASIAAIAAVASA. N-linked (GlcNAc...) asparagine glycosylation is found at Asn-21 and Asn-82. The interval 73-110 is disordered; it reads PLPTTEAPKNTTSPAPTEKPTEKPTEKPTQQGSSTQTV. The segment covering 99–110 has biased composition (low complexity); the sequence is KPTQQGSSTQTV. Gly-115 carries the GPI-anchor amidated glycine lipid modification. Residues 116–136 constitute a propeptide, removed in mature form; sequence AAVKALPAAGALLAGAAALLL.

It belongs to the PGA59 family. Post-translationally, the GPI-anchor is attached to the protein in the endoplasmic reticulum and serves to target the protein to the cell surface. There, the glucosamine-inositol phospholipid moiety is cleaved off and the GPI-modified mannoprotein is covalently attached via its lipidless GPI glycan remnant to the 1,6-beta-glucan of the outer cell wall layer.

The protein localises to the secreted. The protein resides in the cell wall. Its subcellular location is the membrane. Cell wall protein necessary for cell wall integrity. In Saccharomyces cerevisiae (strain ATCC 204508 / S288c) (Baker's yeast), this protein is Putative covalently bound cell wall protein 22 (CCW22).